A 311-amino-acid polypeptide reads, in one-letter code: MRIVFMGTPEFAIPSLEMLVRERYEVAAVVTQPDKPKGRGKKTAMPPVKEFAIKNNIEVLQPSKVKTPEFVSTIRELRPDLLVTAAYGKILPQEVLDIPPYGCVNVHGSLLPKYRGAAPINWAIINGEKVTGITTMYTDAGMDTGDMLLKAEIEISDDMTAGELHDKLACLGAEVLRETLKKIEDSTLQRIPQPHEQATYAPMLDKTVGCINWSKSARDVHNLVRGTNPWPVAFTYYKGQKMKVWVTSVLDEENHNFTPGTILKVGKDGLVVACGVGKVVIKEVQFDSSRRMTVEEYICGHKVGEGEVLGQ.

(6S)-5,6,7,8-tetrahydrofolate is bound at residue 109-112 (SLLP).

It belongs to the Fmt family.

The enzyme catalyses L-methionyl-tRNA(fMet) + (6R)-10-formyltetrahydrofolate = N-formyl-L-methionyl-tRNA(fMet) + (6S)-5,6,7,8-tetrahydrofolate + H(+). Functionally, attaches a formyl group to the free amino group of methionyl-tRNA(fMet). The formyl group appears to play a dual role in the initiator identity of N-formylmethionyl-tRNA by promoting its recognition by IF2 and preventing the misappropriation of this tRNA by the elongation apparatus. This is Methionyl-tRNA formyltransferase from Acetivibrio thermocellus (strain ATCC 27405 / DSM 1237 / JCM 9322 / NBRC 103400 / NCIMB 10682 / NRRL B-4536 / VPI 7372) (Clostridium thermocellum).